A 240-amino-acid polypeptide reads, in one-letter code: Biotin--[acetyl-CoA-carboxylase] ligase (240 aa).

Residues 1-176 (MLARTDSTNA…AFARWQAQLD (176 aa)) enclose the BPL/LPL catalytic domain. Biotin-binding positions include 7–9 (STN), glutamine 30, 34–36 (RGR), and lysine 102.

This sequence belongs to the biotin--protein ligase family.

It catalyses the reaction biotin + L-lysyl-[protein] + ATP = N(6)-biotinyl-L-lysyl-[protein] + AMP + diphosphate + H(+). In terms of biological role, activates biotin to form biotinyl-5'-adenylate and transfers the biotin moiety to biotin-accepting proteins. The polypeptide is Biotin--[acetyl-CoA-carboxylase] ligase (birA) (Paracoccus denitrificans).